The primary structure comprises 360 residues: Phospho-N-acetylmuramoyl-pentapeptide-transferase (360 aa).

Transmembrane regions (helical) follow at residues 27–47, 74–94, 99–119, 135–155, 165–185, 199–219, 236–256, 263–283, 288–308, and 337–357; these read GATATALFFVFFFGPRIIAAL, TMGGLMILSGLIVSTLLWANL, VWVVLFVTTGFGLIGFYDDYL, LLLEVGIAGAACYAMMLLGTP, INGFAVDLGLFFLVVGPFVIV, GLAIVPVMIAAGTFGVIAYLA, AGELSVVTGAVIGAGLGFLWF, IFMGDTGSLALGGLLGAVAVA, IVLAIVGGLFVLETLSVIVQV, and QVVVRFWIIAFVLALIGLSTL.

The protein belongs to the glycosyltransferase 4 family. MraY subfamily. Requires Mg(2+) as cofactor.

It is found in the cell inner membrane. It catalyses the reaction UDP-N-acetyl-alpha-D-muramoyl-L-alanyl-gamma-D-glutamyl-meso-2,6-diaminopimeloyl-D-alanyl-D-alanine + di-trans,octa-cis-undecaprenyl phosphate = di-trans,octa-cis-undecaprenyl diphospho-N-acetyl-alpha-D-muramoyl-L-alanyl-D-glutamyl-meso-2,6-diaminopimeloyl-D-alanyl-D-alanine + UMP. It functions in the pathway cell wall biogenesis; peptidoglycan biosynthesis. In terms of biological role, catalyzes the initial step of the lipid cycle reactions in the biosynthesis of the cell wall peptidoglycan: transfers peptidoglycan precursor phospho-MurNAc-pentapeptide from UDP-MurNAc-pentapeptide onto the lipid carrier undecaprenyl phosphate, yielding undecaprenyl-pyrophosphoryl-MurNAc-pentapeptide, known as lipid I. In Methylocella silvestris (strain DSM 15510 / CIP 108128 / LMG 27833 / NCIMB 13906 / BL2), this protein is Phospho-N-acetylmuramoyl-pentapeptide-transferase.